Reading from the N-terminus, the 412-residue chain is Argininosuccinate synthase (412 aa).

Residues 10–18 and A36 contribute to the ATP site; that span reads AYSGGLDTS. L-citrulline is bound by residues Y87 and S92. Residue 115–123 coordinates ATP; it reads SHGATGKGN. L-aspartate contacts are provided by T119, N123, and D124. N123 is a binding site for L-citrulline. Residues R127, S180, S189, E270, and Y282 each coordinate L-citrulline.

The protein belongs to the argininosuccinate synthase family. As to quaternary structure, homotetramer.

It catalyses the reaction L-citrulline + L-aspartate + ATP = 2-(N(omega)-L-arginino)succinate + AMP + diphosphate + H(+). The protein operates within amino-acid biosynthesis; L-arginine biosynthesis; L-arginine from L-ornithine and carbamoyl phosphate: step 2/3. Its pathway is nitrogen metabolism; urea cycle; (N(omega)-L-arginino)succinate from L-aspartate and L-citrulline: step 1/1. This chain is Argininosuccinate synthase, found in Aedes aegypti (Yellowfever mosquito).